Here is a 237-residue protein sequence, read N- to C-terminus: Lectin alpha chain (237 aa).

2 residues coordinate Mn(2+): Glu8 and Asp10. The Ca(2+) site is built by Asp10, Tyr12, Asn14, and Asp19. Tyr12 is an a carbohydrate binding site. Residues Asp19, His24, and Ser34 each contribute to the Mn(2+) site. Residue 99–100 (LY) coordinates a carbohydrate. Asp208 contacts Ca(2+). Arg228 lines the a carbohydrate pocket.

It belongs to the leguminous lectin family. In terms of assembly, equilibrium between homodimer and homotetramer. Oligomerization is pH-dependent with homotetramers forming at pH 6.5 and above. Post-translationally, the beta and gamma chains are produced by partial proteolytic processing of the lectin alpha chain by an asparaginyl endopeptidase. Mixture of 60% alpha lectin and 40% of its beta and gamma proteolytic fragments.

In terms of biological role, D-mannose/D-glucose-binding lectin. Has anti-inflammatory activity in rats. Induces histamine release in mast cells from rat. Induces lymphocyte proliferation and IFNG production. This chain is Lectin alpha chain, found in Dioclea guianensis.